Here is a 689-residue protein sequence, read N- to C-terminus: Glycine--tRNA ligase beta subunit (689 aa).

Belongs to the class-II aminoacyl-tRNA synthetase family. In terms of assembly, tetramer of two alpha and two beta subunits.

The protein resides in the cytoplasm. It carries out the reaction tRNA(Gly) + glycine + ATP = glycyl-tRNA(Gly) + AMP + diphosphate. The protein is Glycine--tRNA ligase beta subunit of Acinetobacter baumannii (strain ATCC 17978 / DSM 105126 / CIP 53.77 / LMG 1025 / NCDC KC755 / 5377).